The sequence spans 571 residues: Proline--tRNA ligase (571 aa).

It belongs to the class-II aminoacyl-tRNA synthetase family. ProS type 1 subfamily. Homodimer.

Its subcellular location is the cytoplasm. The catalysed reaction is tRNA(Pro) + L-proline + ATP = L-prolyl-tRNA(Pro) + AMP + diphosphate. In terms of biological role, catalyzes the attachment of proline to tRNA(Pro) in a two-step reaction: proline is first activated by ATP to form Pro-AMP and then transferred to the acceptor end of tRNA(Pro). As ProRS can inadvertently accommodate and process non-cognate amino acids such as alanine and cysteine, to avoid such errors it has two additional distinct editing activities against alanine. One activity is designated as 'pretransfer' editing and involves the tRNA(Pro)-independent hydrolysis of activated Ala-AMP. The other activity is designated 'posttransfer' editing and involves deacylation of mischarged Ala-tRNA(Pro). The misacylated Cys-tRNA(Pro) is not edited by ProRS. The protein is Proline--tRNA ligase of Pseudomonas putida (strain ATCC 47054 / DSM 6125 / CFBP 8728 / NCIMB 11950 / KT2440).